Consider the following 409-residue polypeptide: L-cysteine:1D-myo-inositol 2-amino-2-deoxy-alpha-D-glucopyranoside ligase (409 aa).

C43 contacts Zn(2+). Residues 43–46 (CGIT), T58, and 81–83 (NVT) each bind L-cysteinyl-5'-AMP. The short motif at 45–55 (ITPYDATHMGH) is the 'HIGH' region element. The 'ERGGDP' region signature appears at 183 to 188 (ERGGDP). W224 contributes to the L-cysteinyl-5'-AMP binding site. C228 is a Zn(2+) binding site. An L-cysteinyl-5'-AMP-binding site is contributed by 246 to 248 (GSD). H253 is a binding site for Zn(2+). V280 lines the L-cysteinyl-5'-AMP pocket. Positions 286-290 (KMSKS) match the 'KMSKS' region motif.

It belongs to the class-I aminoacyl-tRNA synthetase family. MshC subfamily. As to quaternary structure, monomer. Zn(2+) serves as cofactor.

It carries out the reaction 1D-myo-inositol 2-amino-2-deoxy-alpha-D-glucopyranoside + L-cysteine + ATP = 1D-myo-inositol 2-(L-cysteinylamino)-2-deoxy-alpha-D-glucopyranoside + AMP + diphosphate + H(+). Catalyzes the ATP-dependent condensation of GlcN-Ins and L-cysteine to form L-Cys-GlcN-Ins. The chain is L-cysteine:1D-myo-inositol 2-amino-2-deoxy-alpha-D-glucopyranoside ligase (mshC) from Streptomyces avermitilis (strain ATCC 31267 / DSM 46492 / JCM 5070 / NBRC 14893 / NCIMB 12804 / NRRL 8165 / MA-4680).